Consider the following 545-residue polypeptide: Sphingosine-1-phosphate lyase (545 aa).

Residues 1–26 (MRPFSGSDCLKPVTEGINRAFGAKEP) lie on the Lumenal side of the membrane. Residues 27-47 (WQVATITATTVLGGVWLWTVI) traverse the membrane as a helical; Signal-anchor for type III membrane protein segment. Topologically, residues 48 to 545 (CQDENLYIRG…HSMYYTPSQK (498 aa)) are cytoplasmic. K342 is subject to N6-(pyridoxal phosphate)lysine.

This sequence belongs to the group II decarboxylase family. Sphingosine-1-phosphate lyase subfamily. It depends on pyridoxal 5'-phosphate as a cofactor. In terms of tissue distribution, localized to the developing gut primordium during embryogenesis.

It is found in the endoplasmic reticulum membrane. The catalysed reaction is sphinganine 1-phosphate = hexadecanal + phosphoethanolamine. The protein operates within lipid metabolism; sphingolipid metabolism. Its function is as follows. Cleaves phosphorylated sphingoid bases (PSBs), such as sphingosine-1-phosphate, into fatty aldehydes and phosphoethanolamine. Sphingolipid catabolism is required for normal development including viability, reproduction and muscle development. The protein is Sphingosine-1-phosphate lyase of Drosophila melanogaster (Fruit fly).